Here is a 459-residue protein sequence, read N- to C-terminus: Zinc finger protein ZFP2 (459 aa).

C2H2-type zinc fingers lie at residues 100 to 122 (YGCD…QRIH), 128 to 150 (YTCN…QRTH), 156 to 178 (YKCH…QRTH), 184 to 206 (YQCK…ERIH), 212 to 234 (YKCH…QRTH), 240 to 262 (YECN…QRSH), 268 to 290 (YECS…QRNH), 296 to 318 (YKCN…QRLH), 324 to 346 (FECN…RRIH), 352 to 374 (YECM…QVIH), 380 to 402 (YECT…QRIH), 408 to 430 (YECD…QRIH), and 436 to 458 (YQCN…QRTH).

This sequence belongs to the krueppel C2H2-type zinc-finger protein family.

It is found in the nucleus. Probable transcription factor involved in neuronal differentiation and/or phenotypic maintenance. The sequence is that of Zinc finger protein ZFP2 (Zfp2) from Mus musculus (Mouse).